Reading from the N-terminus, the 320-residue chain is ATP-dependent 6-phosphofructokinase (320 aa).

Glycine 12 is an ATP binding site. Residues 22–26 (RGVVR) and 55–60 (RYSVSD) contribute to the ADP site. Residues 73-74 (RF) and 103-106 (GDGS) each bind ATP. Mg(2+) is bound at residue aspartate 104. 126-128 (TID) lines the substrate pocket. Aspartate 128 serves as the catalytic Proton acceptor. Arginine 155 serves as a coordination point for ADP. Residues arginine 163 and 170 to 172 (MGR) each bind substrate. Residues 186-188 (GCE), lysine 212, and 214-216 (KKH) each bind ADP. Residues glutamate 223, arginine 244, and 250–253 (HIQR) each bind substrate.

This sequence belongs to the phosphofructokinase type A (PFKA) family. ATP-dependent PFK group I subfamily. Prokaryotic clade 'B1' sub-subfamily. As to quaternary structure, homotetramer. It depends on Mg(2+) as a cofactor.

The protein localises to the cytoplasm. The catalysed reaction is beta-D-fructose 6-phosphate + ATP = beta-D-fructose 1,6-bisphosphate + ADP + H(+). It functions in the pathway carbohydrate degradation; glycolysis; D-glyceraldehyde 3-phosphate and glycerone phosphate from D-glucose: step 3/4. Allosterically activated by ADP and other diphosphonucleosides, and allosterically inhibited by phosphoenolpyruvate. In terms of biological role, catalyzes the phosphorylation of D-fructose 6-phosphate to fructose 1,6-bisphosphate by ATP, the first committing step of glycolysis. The polypeptide is ATP-dependent 6-phosphofructokinase (Erwinia tasmaniensis (strain DSM 17950 / CFBP 7177 / CIP 109463 / NCPPB 4357 / Et1/99)).